Consider the following 1399-residue polypeptide: DNA-directed RNA polymerase subunit beta' (1399 aa).

Residues Cys70, Cys72, Cys85, and Cys88 each coordinate Zn(2+). The Mg(2+) site is built by Asp460, Asp462, and Asp464. Zn(2+) contacts are provided by Cys814, Cys888, Cys895, and Cys898.

This sequence belongs to the RNA polymerase beta' chain family. In terms of assembly, the RNAP catalytic core consists of 2 alpha, 1 beta, 1 beta' and 1 omega subunit. When a sigma factor is associated with the core the holoenzyme is formed, which can initiate transcription. Requires Mg(2+) as cofactor. It depends on Zn(2+) as a cofactor.

The enzyme catalyses RNA(n) + a ribonucleoside 5'-triphosphate = RNA(n+1) + diphosphate. In terms of biological role, DNA-dependent RNA polymerase catalyzes the transcription of DNA into RNA using the four ribonucleoside triphosphates as substrates. The sequence is that of DNA-directed RNA polymerase subunit beta' from Pseudomonas savastanoi pv. phaseolicola (strain 1448A / Race 6) (Pseudomonas syringae pv. phaseolicola (strain 1448A / Race 6)).